Reading from the N-terminus, the 203-residue chain is Mitotic spindle checkpoint component mad2 (203 aa).

One can recognise an HORMA domain in the interval lysine 13–valine 197.

The protein belongs to the MAD2 family. Interacts with mad3 and slp1.

It is found in the nucleus. Feedback control that prevents cells with incompletely assembled spindles from leaving mitosis. It interacts with the anaphase promoting complex/cyclosome (APC/C) thereby inhibiting APC/C-dependent proteolysis, a step required for exit from mitosis. This chain is Mitotic spindle checkpoint component mad2, found in Schizosaccharomyces pombe (strain 972 / ATCC 24843) (Fission yeast).